Here is a 373-residue protein sequence, read N- to C-terminus: MSDNSKIRVVVGMSGGVDSSVTALLLKEQGYDVIGIFMKNWDDTDEFGVCTATEDYKDVAAVADQIGIPYYSVNFEKEYWDRVFEYFLAEYRAGRTPNPDVMCNKEIKFKAFLDYALTLGADYVATGHYAQVKRDQDGLVHMLRGKDNNKDQTYFLSQLSQEQLQKTMFPLGHLEKPEVRAIAERAGLATAKKKDSTGICFIGEKNFKEFLSQYLPAQPGRMMTLEGRDMGQHAGLMYYTIGQRGGLGIGGQHGGDNEPWFVVGKDLSQNILYVGQGFYHDNLMSTSLDASQVHFTKEMPEEFTMECTAKFRYRQPDSKVTVTVKGDKAVVNFDKPQRAITPGQGVVFYDGDECLGGGLIDRAYKNGQVLQYI.

ATP is bound by residues 12–19 (GMSGGVDS) and Met38. An interaction with target base in tRNA region spans residues 98-100 (NPD). Cys103 functions as the Nucleophile in the catalytic mechanism. Cys103 and Cys200 are joined by a disulfide. An ATP-binding site is contributed by Gly127. The interaction with tRNA stretch occupies residues 150-152 (KDQ). The Cysteine persulfide intermediate role is filled by Cys200. The interaction with tRNA stretch occupies residues 312–313 (RY).

Belongs to the MnmA/TRMU family.

It is found in the cytoplasm. The catalysed reaction is S-sulfanyl-L-cysteinyl-[protein] + uridine(34) in tRNA + AH2 + ATP = 2-thiouridine(34) in tRNA + L-cysteinyl-[protein] + A + AMP + diphosphate + H(+). In terms of biological role, catalyzes the 2-thiolation of uridine at the wobble position (U34) of tRNA, leading to the formation of s(2)U34. This Streptococcus sanguinis (strain SK36) protein is tRNA-specific 2-thiouridylase MnmA.